Here is a 398-residue protein sequence, read N- to C-terminus: Aurofusarin biosynthesis regulatory protein aurR1 (398 aa).

Positions 18 to 45 (CDNCAKSKVRCGKEQPWCQRCERRGQVC) form a DNA-binding region, zn(2)-C6 fungal-type. Disordered regions lie at residues 52-73 (RSRKRTLDAAHPESDQRNGTPP) and 275-314 (AATIDDHTSPTPSNDGKDTERSVSRDTNVSQDGSEPSSLI). Basic and acidic residues-rich tracts occupy residues 56–67 (RTLDAAHPESDQ) and 289–298 (DGKDTERSVS). Residues 299-311 (RDTNVSQDGSEPS) show a composition bias toward polar residues.

It localises to the nucleus. In terms of biological role, transcription factor that specifically regulates the expression of the gene cluster that mediates the biosynthesis of aurofusarin, a red mycelium pigment which is acting as a mycotoxin. This chain is Aurofusarin biosynthesis regulatory protein aurR1, found in Gibberella zeae (strain ATCC MYA-4620 / CBS 123657 / FGSC 9075 / NRRL 31084 / PH-1) (Wheat head blight fungus).